Reading from the N-terminus, the 162-residue chain is Phosphopantetheine adenylyltransferase (162 aa).

Thr-10 contacts substrate. ATP contacts are provided by residues Thr-10 to Phe-11 and His-18. Substrate-binding residues include Lys-42, Leu-74, and Arg-88. ATP contacts are provided by residues Gly-89–Arg-91, Glu-99, and Tyr-124–Ser-130.

It belongs to the bacterial CoaD family. As to quaternary structure, homohexamer. Requires Mg(2+) as cofactor.

It localises to the cytoplasm. The enzyme catalyses (R)-4'-phosphopantetheine + ATP + H(+) = 3'-dephospho-CoA + diphosphate. It participates in cofactor biosynthesis; coenzyme A biosynthesis; CoA from (R)-pantothenate: step 4/5. In terms of biological role, reversibly transfers an adenylyl group from ATP to 4'-phosphopantetheine, yielding dephospho-CoA (dPCoA) and pyrophosphate. This is Phosphopantetheine adenylyltransferase from Methylococcus capsulatus (strain ATCC 33009 / NCIMB 11132 / Bath).